A 308-amino-acid polypeptide reads, in one-letter code: Protein translocase subunit SecF (308 aa).

6 helical membrane passes run 18 to 38, 134 to 154, 160 to 180, 193 to 213, 244 to 264, and 272 to 292; these read AYVF…TRGL, GAIY…LIRF, LGAV…FSLL, TIIA…VVVF, IITS…GGEV, and LIVG…PVVI.

The protein belongs to the SecD/SecF family. SecF subfamily. In terms of assembly, forms a complex with SecD. Part of the essential Sec protein translocation apparatus which comprises SecA, SecYEG and auxiliary proteins SecDF. Other proteins may also be involved.

Its subcellular location is the cell inner membrane. In terms of biological role, part of the Sec protein translocase complex. Interacts with the SecYEG preprotein conducting channel. SecDF uses the proton motive force (PMF) to complete protein translocation after the ATP-dependent function of SecA. The protein is Protein translocase subunit SecF of Rhodothermus marinus (strain ATCC 43812 / DSM 4252 / R-10) (Rhodothermus obamensis).